The following is a 294-amino-acid chain: Glutamate-binding protein GluB (294 aa).

The N-terminal stretch at 1–26 is a signal peptide; it reads MSHKRMFTRLAAATSAAVLAGITLTA. Cysteine 27 carries the N-palmitoyl cysteine lipid modification. Cysteine 27 is lipidated: S-diacylglycerol cysteine.

The protein belongs to the bacterial solute-binding protein 3 family. In terms of assembly, the complex is composed of two ATP-binding proteins (GluA), two transmembrane proteins (GluC and GluD) and a solute-binding protein (GluB).

It is found in the cell membrane. In terms of biological role, part of the ABC transporter complex GluABCD involved in glutamate uptake. Binds glutamate with a high affinity. The polypeptide is Glutamate-binding protein GluB (Corynebacterium efficiens (strain DSM 44549 / YS-314 / AJ 12310 / JCM 11189 / NBRC 100395)).